A 164-amino-acid chain; its full sequence is Protein SprT (164 aa).

Positions 13 to 156 (YQQAEAFFKR…LCKRCREILV (144 aa)) constitute a SprT-like domain. His-69 serves as a coordination point for Zn(2+). Residue Glu-70 is part of the active site. Residue His-73 coordinates Zn(2+).

Belongs to the SprT family. The cofactor is Zn(2+).

The protein localises to the cytoplasm. In Pseudomonas putida (strain ATCC 700007 / DSM 6899 / JCM 31910 / BCRC 17059 / LMG 24140 / F1), this protein is Protein SprT.